Reading from the N-terminus, the 502-residue chain is 2-isopropylmalate synthase (502 aa).

Mn(2+) contacts are provided by D1, H189, H191, and N225. The region spanning 1-254 is the Pyruvate carboxyltransferase domain; the sequence is DGEQALQASL…STNINHKEIY (254 aa). The regulatory domain stretch occupies residues 379 to 502; it reads CLKFFSVQSI…VNKNLKNLKK (124 aa).

Belongs to the alpha-IPM synthase/homocitrate synthase family. LeuA type 1 subfamily. As to quaternary structure, homodimer. Mn(2+) serves as cofactor.

Its subcellular location is the cytoplasm. It carries out the reaction 3-methyl-2-oxobutanoate + acetyl-CoA + H2O = (2S)-2-isopropylmalate + CoA + H(+). The protein operates within amino-acid biosynthesis; L-leucine biosynthesis; L-leucine from 3-methyl-2-oxobutanoate: step 1/4. Its function is as follows. Catalyzes the condensation of the acetyl group of acetyl-CoA with 3-methyl-2-oxobutanoate (2-ketoisovalerate) to form 3-carboxy-3-hydroxy-4-methylpentanoate (2-isopropylmalate). The chain is 2-isopropylmalate synthase from Buchnera aphidicola subsp. Uroleucon sonchi.